Consider the following 649-residue polypeptide: ATP-dependent zinc metalloprotease FtsH (649 aa).

The Cytoplasmic segment spans residues 1–18; the sequence is MQCSYPLARQLERSSALN. A helical membrane pass occupies residues 19–39; the sequence is NNLFQKAAIWLVIALVLFTVF. At 40–115 the chain is on the periplasmic side; it reads KQFDKPRAQD…VTGKADDEPN (76 aa). The helical transmembrane segment at 116–136 threads the bilayer; the sequence is VLVQALYYLGPTLLIIVFWFY. At 137–649 the chain is on the cytoplasmic side; it reads MMRQMQGGGK…PATARADETV (513 aa). 210–217 is a binding site for ATP; it reads GPPGTGKT. His-432 lines the Zn(2+) pocket. The active site involves Glu-433. Zn(2+)-binding residues include His-436 and Asp-508. Positions 606–649 are disordered; that stretch reads IMAGRPPRPPRGAQGPNSGGNTPPGGSPVAPTNAPATARADETV. The span at 616 to 626 shows a compositional bias: low complexity; sequence RGAQGPNSGGN.

In the central section; belongs to the AAA ATPase family. The protein in the C-terminal section; belongs to the peptidase M41 family. Homohexamer. Zn(2+) serves as cofactor.

The protein localises to the cell inner membrane. Acts as a processive, ATP-dependent zinc metallopeptidase for both cytoplasmic and membrane proteins. Plays a role in the quality control of integral membrane proteins. This chain is ATP-dependent zinc metalloprotease FtsH, found in Cupriavidus metallidurans (strain ATCC 43123 / DSM 2839 / NBRC 102507 / CH34) (Ralstonia metallidurans).